A 320-amino-acid polypeptide reads, in one-letter code: ATP-dependent 6-phosphofructokinase (320 aa).

Position 12 (Gly12) interacts with ATP. Residue 22-26 (RGVVR) participates in ADP binding. Residues 73-74 (RF) and 103-106 (GDGS) each bind ATP. A Mg(2+)-binding site is contributed by Asp104. Position 126-128 (126-128 (TID)) interacts with substrate. Residue Asp128 is the Proton acceptor of the active site. Arg155 contributes to the ADP binding site. Residues Arg163 and 170 to 172 (MGR) each bind substrate. ADP is bound by residues 186-188 (GCE), Lys212, and 214-216 (KKH). Residues Glu223, Arg244, and 250–253 (HIQR) contribute to the substrate site.

Belongs to the phosphofructokinase type A (PFKA) family. ATP-dependent PFK group I subfamily. Prokaryotic clade 'B1' sub-subfamily. As to quaternary structure, homotetramer. Mg(2+) serves as cofactor.

It localises to the cytoplasm. The enzyme catalyses beta-D-fructose 6-phosphate + ATP = beta-D-fructose 1,6-bisphosphate + ADP + H(+). Its pathway is carbohydrate degradation; glycolysis; D-glyceraldehyde 3-phosphate and glycerone phosphate from D-glucose: step 3/4. Its activity is regulated as follows. Allosterically activated by ADP and other diphosphonucleosides, and allosterically inhibited by phosphoenolpyruvate. In terms of biological role, catalyzes the phosphorylation of D-fructose 6-phosphate to fructose 1,6-bisphosphate by ATP, the first committing step of glycolysis. This Vibrio cholerae serotype O1 (strain ATCC 39315 / El Tor Inaba N16961) protein is ATP-dependent 6-phosphofructokinase.